The primary structure comprises 915 residues: Probable dipeptidyl-aminopeptidase B (915 aa).

The interval 1–82 (MAPPFTDDPE…GAFLGPPGVP (82 aa)) is disordered. Residues 1 to 94 (MAPPFTDDPE…RQPMDRGFRR (94 aa)) lie on the Cytoplasmic side of the membrane. Over residues 15–32 (STSRLSQDSLSSVSTTSL) the composition is skewed to low complexity. The segment covering 36–62 (RIQEEMDRDPSASRSARRDLLPATKDE) has biased composition (basic and acidic residues). The helical; Signal-anchor for type II membrane protein transmembrane segment at 95–115 (ILIIIGAVFVGAWLAGLGIFV) threads the bilayer. Residues 116–915 (LSGSYKHESD…IDTKKRRHVS (800 aa)) are Vacuolar-facing. Residues N355 and N577 are each glycosylated (N-linked (GlcNAc...) asparagine). S760 serves as the catalytic Charge relay system. N819 is a glycosylation site (N-linked (GlcNAc...) asparagine). Residues D837 and H870 each act as charge relay system in the active site.

It belongs to the peptidase S9B family.

The protein resides in the vacuole membrane. The catalysed reaction is Release of an N-terminal dipeptide, Xaa-Yaa-|-Zaa-, from a polypeptide, preferentially when Yaa is Pro, provided Zaa is neither Pro nor hydroxyproline.. Functionally, type IV dipeptidyl-peptidase which removes N-terminal dipeptides sequentially from polypeptides having unsubstituted N-termini provided that the penultimate residue is proline. The sequence is that of Probable dipeptidyl-aminopeptidase B (DAPB) from Metarhizium robertsii (strain ARSEF 23 / ATCC MYA-3075) (Metarhizium anisopliae (strain ARSEF 23)).